The following is a 211-amino-acid chain: Urease accessory protein UreG (211 aa).

11–18 (GPVGAGKT) lines the GTP pocket.

This sequence belongs to the SIMIBI class G3E GTPase family. UreG subfamily. In terms of assembly, homodimer. UreD, UreF and UreG form a complex that acts as a GTP-hydrolysis-dependent molecular chaperone, activating the urease apoprotein by helping to assemble the nickel containing metallocenter of UreC. The UreE protein probably delivers the nickel.

Its subcellular location is the cytoplasm. Its function is as follows. Facilitates the functional incorporation of the urease nickel metallocenter. This process requires GTP hydrolysis, probably effectuated by UreG. The chain is Urease accessory protein UreG from Actinobacillus pleuropneumoniae serotype 3 (strain JL03).